A 598-amino-acid polypeptide reads, in one-letter code: N-acetylmuramoyl-L-alanine amidase (598 aa).

The signal sequence occupies residues 1–31 (MSPGNWKTTMVVRGILLILYGLLLQPEPGTA). Disordered regions lie at residues 172–194 (SSAH…SPNV) and 212–233 (STGV…KAKS). Position 261 is a phosphoserine (Ser261). Asn353 carries N-linked (GlcNAc...) asparagine glycosylation. Positions 428-554 (FLYIHHTYVP…RQLVRTDCPG (127 aa)) constitute an N-acetylmuramoyl-L-alanine amidase domain. His432 contributes to the Zn(2+) binding site. A disulfide bond links Cys441 and Cys447. Residue Asn507 is glycosylated (N-linked (GlcNAc...) asparagine). Zn(2+) contacts are provided by His544 and Cys552.

This sequence belongs to the N-acetylmuramoyl-L-alanine amidase 2 family. The cofactor is Zn(2+).

The protein resides in the secreted. The protein localises to the membrane. The enzyme catalyses Hydrolyzes the link between N-acetylmuramoyl residues and L-amino acid residues in certain cell-wall glycopeptides.. Functionally, may play a scavenger role by digesting biologically active peptidoglycan (PGN) into biologically inactive fragments. Has no direct bacteriolytic activity. This Sus scrofa (Pig) protein is N-acetylmuramoyl-L-alanine amidase (PGLYRP2).